The following is a 508-amino-acid chain: Photosystem II CP47 reaction center protein (508 aa).

Helical transmembrane passes span 21–36 (AVHL…WAGS), 101–115 (IVLS…VWHW), 140–156 (GIHL…FGAF), 203–218 (IAAG…FHLT), 237–252 (VLSS…AFVV), and 457–472 (SFAL…HGSR).

This sequence belongs to the PsbB/PsbC family. PsbB subfamily. As to quaternary structure, PSII is composed of 1 copy each of membrane proteins PsbA, PsbB, PsbC, PsbD, PsbE, PsbF, PsbH, PsbI, PsbJ, PsbK, PsbL, PsbM, PsbT, PsbX, PsbY, PsbZ, Psb30/Ycf12, peripheral proteins PsbO, CyanoQ (PsbQ), PsbU, PsbV and a large number of cofactors. It forms dimeric complexes. It depends on Binds multiple chlorophylls. PSII binds additional chlorophylls, carotenoids and specific lipids. as a cofactor.

It localises to the cellular thylakoid membrane. One of the components of the core complex of photosystem II (PSII). It binds chlorophyll and helps catalyze the primary light-induced photochemical processes of PSII. PSII is a light-driven water:plastoquinone oxidoreductase, using light energy to abstract electrons from H(2)O, generating O(2) and a proton gradient subsequently used for ATP formation. In Synechococcus elongatus (strain ATCC 33912 / PCC 7942 / FACHB-805) (Anacystis nidulans R2), this protein is Photosystem II CP47 reaction center protein.